The sequence spans 469 residues: 3-isopropylmalate dehydratase large subunit (469 aa).

C347, C410, and C413 together coordinate [4Fe-4S] cluster.

Belongs to the aconitase/IPM isomerase family. LeuC type 1 subfamily. Heterodimer of LeuC and LeuD. Requires [4Fe-4S] cluster as cofactor.

It carries out the reaction (2R,3S)-3-isopropylmalate = (2S)-2-isopropylmalate. It functions in the pathway amino-acid biosynthesis; L-leucine biosynthesis; L-leucine from 3-methyl-2-oxobutanoate: step 2/4. Its function is as follows. Catalyzes the isomerization between 2-isopropylmalate and 3-isopropylmalate, via the formation of 2-isopropylmaleate. The polypeptide is 3-isopropylmalate dehydratase large subunit (Burkholderia ambifaria (strain MC40-6)).